The following is a 610-amino-acid chain: Dopamine beta-hydroxylase (610 aa).

The Cytoplasmic portion of the chain corresponds to 1 to 9 (MQVPSPSVR). A helical; Signal-anchor for type II membrane protein membrane pass occupies residues 10–30 (EAASMYGTAVAVFLVILVAAL). The Intragranular portion of the chain corresponds to 31-610 (QGSAPAESPF…TVLNISGGKG (580 aa)). The region spanning 50–166 (GTLELSWNIS…GTVHLVYGFL (117 aa)) is the DOMON domain. 6 disulfides stabilise this stretch: Cys-147/Cys-589, Cys-225/Cys-276, Cys-262/Cys-288, Cys-383/Cys-496, Cys-387/Cys-558, and Cys-459/Cys-481. An N-linked (GlcNAc...) asparagine glycan is attached at Asn-177. Tyr-223 is an active-site residue. 2 residues coordinate Cu(2+): His-255 and His-256. 4 residues coordinate Cu(2+): His-326, His-405, His-407, and Met-480. Residue His-405 is part of the active site. N-linked (GlcNAc...) asparagine glycosylation is present at Asn-559. Residues 585–610 (PTPHCPASQAQSPAGPTVLNISGGKG) are disordered.

Belongs to the copper type II ascorbate-dependent monooxygenase family. Homotetramer; composed of two disulfide-linked dimers. Requires Cu(2+) as cofactor. Proteolytic cleavage after the membrane-anchor leads to the release of the soluble form. Post-translationally, N-glycosylated. Detected in chromaffin granules in the adrenal medulla (at protein level). Detected in adrenal medulla.

Its subcellular location is the cytoplasmic vesicle. It localises to the secretory vesicle lumen. The protein resides in the secretory vesicle. It is found in the chromaffin granule lumen. The protein localises to the secretory vesicle membrane. Its subcellular location is the chromaffin granule membrane. The catalysed reaction is dopamine + 2 L-ascorbate + O2 = (R)-noradrenaline + 2 monodehydro-L-ascorbate radical + H2O. It functions in the pathway catecholamine biosynthesis; (R)-noradrenaline biosynthesis; (R)-noradrenaline from dopamine: step 1/1. Catalyzes the hydroxylation of dopamine to noradrenaline (also known as norepinephrine), and is thus vital for regulation of these neurotransmitters. The protein is Dopamine beta-hydroxylase (DBH) of Bos taurus (Bovine).